Consider the following 412-residue polypeptide: Thyroxine-binding globulin (412 aa).

Residues 1–16 (MPLFFSLVLLILGLHC) form the signal peptide. N-linked (GlcNAc...) asparagine glycans are attached at residues asparagine 35, asparagine 98, asparagine 164, and asparagine 252. Residues asparagine 292 and lysine 395 each contribute to the thyroxine site.

This sequence belongs to the serpin family. Expressed by the liver and secreted in plasma.

The protein localises to the secreted. Its function is as follows. Major thyroid hormone transport protein in serum. The protein is Thyroxine-binding globulin (SERPINA7) of Ovis aries (Sheep).